Reading from the N-terminus, the 139-residue chain is Nucleoside diphosphate kinase (139 aa).

Lys-10, Phe-58, Arg-86, Thr-92, Arg-104, and Asn-114 together coordinate ATP. His-117 serves as the catalytic Pros-phosphohistidine intermediate.

This sequence belongs to the NDK family. As to quaternary structure, homotetramer. It depends on Mg(2+) as a cofactor.

It is found in the cytoplasm. The catalysed reaction is a 2'-deoxyribonucleoside 5'-diphosphate + ATP = a 2'-deoxyribonucleoside 5'-triphosphate + ADP. It carries out the reaction a ribonucleoside 5'-diphosphate + ATP = a ribonucleoside 5'-triphosphate + ADP. Functionally, major role in the synthesis of nucleoside triphosphates other than ATP. The ATP gamma phosphate is transferred to the NDP beta phosphate via a ping-pong mechanism, using a phosphorylated active-site intermediate. The chain is Nucleoside diphosphate kinase from Mycolicibacterium smegmatis (strain ATCC 700084 / mc(2)155) (Mycobacterium smegmatis).